A 320-amino-acid polypeptide reads, in one-letter code: Sucrose operon repressor (320 aa).

An HTH lacI-type domain is found at 1-57 (MVAKLTDVAKLAGVSPTTVSRVINRKGYLSEKTITKVQAAMKTLGYKPNNLARSLQG). The H-T-H motif DNA-binding region spans 5–24 (LTDVAKLAGVSPTTVSRVIN).

Negative regulator of scrB expression. The chain is Sucrose operon repressor (scrR) from Streptococcus mutans serotype c (strain ATCC 700610 / UA159).